Reading from the N-terminus, the 260-residue chain is Cytochrome c oxidase subunit 3 (260 aa).

6 helical membrane-spanning segments follow: residues 41–61, 81–101, 133–153, 161–181, 196–216, and 238–258; these read LTLVGFLLLITNMVNWWRDII, GMILFITSEVCFFFAFFWAFF, TGVLLSSGVTLSWSHHSILAG, ALFLTVALGSYFTALQAWEYI, FFVATGFHGLQVIIGTTFLMV, and AWYWHFVDVVWFVLYWLIYWW.

The protein belongs to the cytochrome c oxidase subunit 3 family. In terms of assembly, component of the cytochrome c oxidase (complex IV, CIV), a multisubunit enzyme composed of a catalytic core of 3 subunits and several supernumerary subunits. The complex exists as a monomer or a dimer and forms supercomplexes (SCs) in the inner mitochondrial membrane with ubiquinol-cytochrome c oxidoreductase (cytochrome b-c1 complex, complex III, CIII).

Its subcellular location is the mitochondrion inner membrane. The catalysed reaction is 4 Fe(II)-[cytochrome c] + O2 + 8 H(+)(in) = 4 Fe(III)-[cytochrome c] + 2 H2O + 4 H(+)(out). In terms of biological role, component of the cytochrome c oxidase, the last enzyme in the mitochondrial electron transport chain which drives oxidative phosphorylation. The respiratory chain contains 3 multisubunit complexes succinate dehydrogenase (complex II, CII), ubiquinol-cytochrome c oxidoreductase (cytochrome b-c1 complex, complex III, CIII) and cytochrome c oxidase (complex IV, CIV), that cooperate to transfer electrons derived from NADH and succinate to molecular oxygen, creating an electrochemical gradient over the inner membrane that drives transmembrane transport and the ATP synthase. Cytochrome c oxidase is the component of the respiratory chain that catalyzes the reduction of oxygen to water. Electrons originating from reduced cytochrome c in the intermembrane space (IMS) are transferred via the dinuclear copper A center (CU(A)) of subunit 2 and heme A of subunit 1 to the active site in subunit 1, a binuclear center (BNC) formed by heme A3 and copper B (CU(B)). The BNC reduces molecular oxygen to 2 water molecules using 4 electrons from cytochrome c in the IMS and 4 protons from the mitochondrial matrix. The protein is Cytochrome c oxidase subunit 3 (COIII) of Strongylocentrotus purpuratus (Purple sea urchin).